A 616-amino-acid chain; its full sequence is Fatty acyl-CoA reductase 2, chloroplastic (616 aa).

The N-terminal 14 residues, 1 to 14 (MEALFLSSSSSSIV), are a transit peptide targeting the chloroplast. Positions 133–143 (FLITGSTGFLA) match the NAD(P)H-binding motif. Catalysis depends on residues Tyr357 and Lys361.

Belongs to the fatty acyl-CoA reductase family. As to expression, expressed in the tapetum of anthers.

It is found in the plastid. Its subcellular location is the chloroplast. The catalysed reaction is a long-chain fatty acyl-CoA + 2 NADPH + 2 H(+) = a long-chain primary fatty alcohol + 2 NADP(+) + CoA. The enzyme catalyses hexadecanoyl-CoA + 2 NADPH + 2 H(+) = hexadecan-1-ol + 2 NADP(+) + CoA. It catalyses the reaction hexadecanoyl-[ACP] + 2 NADPH + 2 H(+) = hexadecan-1-ol + holo-[ACP] + 2 NADP(+). Catalyzes the reduction of fatty acyl-CoA and -ACP (acyl carrier protein) substrates to fatty alcohols. Triggers the accumulation of C16 and C18 fatty alcohols; converts palmitoyl-acyl carrier protein to the corresponding C16:0 alcohol with NAD(P)H as electron donor, but seems inactive toward palmitoyl- or other acyl-coenzyme A. Also triggers the formation of some C16:0 aldehydes. Involved in the synthesis of the lipid component in sporopollenin. Required for exine patterning of pollen grain by mediating the formation of pollen wall substances. The sequence is that of Fatty acyl-CoA reductase 2, chloroplastic from Arabidopsis thaliana (Mouse-ear cress).